Here is a 110-residue protein sequence, read N- to C-terminus: Waprin-Thr1 (110 aa).

Residues 1–20 (MYKKGTILVLAYLLIATAVC) form the signal peptide. The WAP domain occupies 22-68 (LSYKEGHCPLRNSVSKCIPRCVSDYQCSFNEKCCPNKCGSESCVQAS). 4 cysteine pairs are disulfide-bonded: C29/C55, C38/C59, C42/C54, and C48/C64.

This sequence belongs to the venom waprin family. Cys-rich waprin subfamily. As to expression, expressed by the venom gland.

It localises to the secreted. Its function is as follows. Antimicrobial peptides with activity against Gram-positive and Gram-negative bacteria as well as fungi. Recognizes carbohydrates in the microbial cell walls, and induces structural damage to them. Also inhibits microbial serine proteases subtilisin A and proteinase K, as well as human and porcine elastases. Carbohydrates that are recognized are LPS, mannan, peptidoglycan, and N-acetl-D-glucosamine. The polypeptide is Waprin-Thr1 (Apis mellifera (Honeybee)).